A 630-amino-acid polypeptide reads, in one-letter code: tRNA uridine 5-carboxymethylaminomethyl modification enzyme MnmG (630 aa).

FAD contacts are provided by residues 13-18 (GGGHAG), valine 125, and serine 180. NAD(+) is bound at residue 273–287 (GPRYCPSIEDKIHRF). Residue glutamine 370 participates in FAD binding.

The protein belongs to the MnmG family. In terms of assembly, homodimer. Heterotetramer of two MnmE and two MnmG subunits. The cofactor is FAD.

The protein localises to the cytoplasm. Its function is as follows. NAD-binding protein involved in the addition of a carboxymethylaminomethyl (cmnm) group at the wobble position (U34) of certain tRNAs, forming tRNA-cmnm(5)s(2)U34. The sequence is that of tRNA uridine 5-carboxymethylaminomethyl modification enzyme MnmG from Shewanella woodyi (strain ATCC 51908 / MS32).